A 63-amino-acid polypeptide reads, in one-letter code: Arabinogalactan protein 22 (63 aa).

Residues 1 to 27 (MASLKFPLEILAVFVIISVILLPIAQS) form the signal peptide. 3 positions are modified to 4-hydroxyproline: Pro-32, Pro-34, and Pro-36. O-linked (Ara...) hydroxyproline glycans are attached at residues Pro-32, Pro-34, and Pro-36. A lipid anchor (GPI-anchor amidated serine) is attached at Ser-38. Residues 39-63 (DGTSIDQGIAYVLMMVALALTYFIH) constitute a propeptide, removed in mature form.

It belongs to the AG-peptide AGP family. Contains 4-hydroxyproline; hydroxylated on Pro-32, Pro-34 and Pro-36. In terms of processing, O-glycosylated on hydroxyprolines; noncontiguous hydroxylproline residues are glycosylated with arabinogalactan.

The protein resides in the cell membrane. Proteoglycan that seems to be implicated in diverse developmental roles such as differentiation, cell-cell recognition, embryogenesis and programmed cell death. The sequence is that of Arabinogalactan protein 22 from Arabidopsis thaliana (Mouse-ear cress).